The primary structure comprises 235 residues: 7-cyano-7-deazaguanine synthase (235 aa).

Residue 16–26 participates in ATP binding; that stretch reads FSGGQDSTTCL. Zn(2+)-binding residues include C193, C201, C204, and C207.

The protein belongs to the QueC family. Requires Zn(2+) as cofactor.

It catalyses the reaction 7-carboxy-7-deazaguanine + NH4(+) + ATP = 7-cyano-7-deazaguanine + ADP + phosphate + H2O + H(+). Its pathway is purine metabolism; 7-cyano-7-deazaguanine biosynthesis. Catalyzes the ATP-dependent conversion of 7-carboxy-7-deazaguanine (CDG) to 7-cyano-7-deazaguanine (preQ(0)). This chain is 7-cyano-7-deazaguanine synthase, found in Actinobacillus succinogenes (strain ATCC 55618 / DSM 22257 / CCUG 43843 / 130Z).